Reading from the N-terminus, the 199-residue chain is CASP-like protein 4B1 (199 aa).

Residues 1–32 (MAMVASPDDIVKSPLPPPPPPPPPPLPPAHKD) are disordered. Over 1-53 (MAMVASPDDIVKSPLPPPPPPPPPPLPPAHKDKAAYNPYSGCPAHGGDDGLDG) the chain is Cytoplasmic. The span at 14-28 (PLPPPPPPPPPPLPP) shows a compositional bias: pro residues. Residues 54–74 (IVLVLRAAAALLALVAMALVA) form a helical membrane-spanning segment. The Extracellular portion of the chain corresponds to 75–91 (SCRHGDWMEFTRYQEYR). Residues 92-112 (YLLGVAVVASLYSALQAARTF) traverse the membrane as a helical segment. At 113-127 (RRMRAGTAYAATFLD) the chain is on the cytoplasmic side. A helical transmembrane segment spans residues 128–148 (FAGDQAVGYLLITASSAALPI). Residues 149 to 163 (TIRMRSAVVNTFTDV) are Extracellular-facing. Residues 164–184 (VAASISFAFLAFAALAFSALI) traverse the membrane as a helical segment. At 185-199 (AGFRLSSSSSSAYNY) the chain is on the cytoplasmic side.

It belongs to the Casparian strip membrane proteins (CASP) family. Homodimer and heterodimers.

It is found in the cell membrane. This Oryza sativa subsp. japonica (Rice) protein is CASP-like protein 4B1.